Consider the following 293-residue polypeptide: Putative peptidyl-prolyl cis-trans isomerase NifM (293 aa).

The region spanning 142–244 is the PpiC domain; it reads PARHKARHIL…IGFHVLFCES (103 aa).

Belongs to the PpiC/parvulin rotamase family.

It carries out the reaction [protein]-peptidylproline (omega=180) = [protein]-peptidylproline (omega=0). Its function is as follows. Required for the activation and stabilization of the iron-component (NifH) of nitrogenase. Probable PPIase. The sequence is that of Putative peptidyl-prolyl cis-trans isomerase NifM (nifM) from Azotobacter chroococcum mcd 1.